Consider the following 831-residue polypeptide: Periplasmic nitrate reductase (831 aa).

The segment at residues methionine 1–alanine 29 is a signal peptide (tat-type signal). In terms of domain architecture, 4Fe-4S Mo/W bis-MGD-type spans isoleucine 41–aspartate 97. Residues cysteine 48, cysteine 51, cysteine 55, and cysteine 83 each contribute to the [4Fe-4S] cluster site. Mo-bis(molybdopterin guanine dinucleotide) contacts are provided by residues lysine 85, glutamine 152, asparagine 177, cysteine 181, tryptophan 214–methionine 221, serine 245–histidine 249, glycine 264–aspartate 266, methionine 375, glutamine 379, asparagine 485, serine 511–aspartate 512, lysine 534, aspartate 561, and threonine 721–serine 730. Tryptophan 797 contributes to the substrate binding site. The Mo-bis(molybdopterin guanine dinucleotide) site is built by asparagine 805 and lysine 822.

The protein belongs to the prokaryotic molybdopterin-containing oxidoreductase family. NasA/NapA/NarB subfamily. In terms of assembly, component of the periplasmic nitrate reductase NapAB complex composed of NapA and NapB. [4Fe-4S] cluster serves as cofactor. Mo-bis(molybdopterin guanine dinucleotide) is required as a cofactor. Predicted to be exported by the Tat system. The position of the signal peptide cleavage has not been experimentally proven.

The protein resides in the periplasm. It catalyses the reaction 2 Fe(II)-[cytochrome] + nitrate + 2 H(+) = 2 Fe(III)-[cytochrome] + nitrite + H2O. In terms of biological role, catalytic subunit of the periplasmic nitrate reductase complex NapAB. Receives electrons from NapB and catalyzes the reduction of nitrate to nitrite. The protein is Periplasmic nitrate reductase of Cereibacter sphaeroides (strain ATCC 17023 / DSM 158 / JCM 6121 / CCUG 31486 / LMG 2827 / NBRC 12203 / NCIMB 8253 / ATH 2.4.1.) (Rhodobacter sphaeroides).